Here is a 143-residue protein sequence, read N- to C-terminus: Photosystem I reaction center subunit IV A, chloroplastic (143 aa).

Residues 1 to 44 (MAMTTASTVFVLPANVTSVAGASSSRSSVSFLPMRNAGSRLVVR) constitute a chloroplast transit peptide. The disordered stretch occupies residues 43 to 85 (VRAAEDPAPASSSSKDSPAAAAAPDGATATKPKPPPIGPKRGS). Residues 48-73 (DPAPASSSSKDSPAAAAAPDGATATK) show a composition bias toward low complexity.

Belongs to the PsaE family. Post-translationally, 2 isoforms may exist. With or without the N-terminal alanine.

The protein resides in the plastid. It is found in the chloroplast thylakoid membrane. Its function is as follows. Stabilizes the interaction between PsaC and the PSI core, assists the docking of the ferredoxin to PSI and interacts with ferredoxin-NADP oxidoreductase. This Arabidopsis thaliana (Mouse-ear cress) protein is Photosystem I reaction center subunit IV A, chloroplastic (PSAE1).